We begin with the raw amino-acid sequence, 283 residues long: Undecaprenyl-diphosphatase (283 aa).

Helical transmembrane passes span Leu4–Ile24, Ala45–Trp65, Gln91–Ala111, Leu118–Val138, Val153–Thr173, Ala194–Leu214, Ile228–Val248, and Ile258–Gly278.

It belongs to the UppP family.

The protein resides in the cell inner membrane. It carries out the reaction di-trans,octa-cis-undecaprenyl diphosphate + H2O = di-trans,octa-cis-undecaprenyl phosphate + phosphate + H(+). Catalyzes the dephosphorylation of undecaprenyl diphosphate (UPP). Confers resistance to bacitracin. This chain is Undecaprenyl-diphosphatase, found in Psychrobacter sp. (strain PRwf-1).